A 262-amino-acid chain; its full sequence is Hemin import ATP-binding protein HmuV (262 aa).

The 242-residue stretch at 3-244 (LQARNLTLAR…DHMRRVYGIE (242 aa)) folds into the ABC transporter domain. ATP is bound at residue 35 to 42 (GANGAGKS).

It belongs to the ABC transporter superfamily. Heme (hemin) importer (TC 3.A.1.14.5) family. In terms of assembly, the complex is composed of two ATP-binding proteins (HmuV), two transmembrane proteins (HmuU) and a solute-binding protein (HmuT).

The protein resides in the cell inner membrane. Its function is as follows. Part of the ABC transporter complex HmuTUV involved in hemin import. Responsible for energy coupling to the transport system. The polypeptide is Hemin import ATP-binding protein HmuV (Bordetella pertussis (strain Tohama I / ATCC BAA-589 / NCTC 13251)).